We begin with the raw amino-acid sequence, 832 residues long: Golgin subfamily A member 6-like protein 24 (832 aa).

5 disordered regions span residues 1–107 (MWPQ…QEAL), 303–333 (QEQE…MRRQ), 351–431 (MHEQ…EMWR), 508–652 (QEEM…EQEE), and 664–832 (QEEM…MQEH). The segment covering 13-27 (LPTHPHLPTHPHLPT) has biased composition (basic residues). Basic and acidic residues predominate over residues 37–58 (MSKETRQSKLAEAKEQLTDHHP). 2 stretches are compositionally biased toward polar residues: residues 59 to 69 (QTNPSVGTAAS) and 77 to 89 (NNGT…TSGG). Residues 92–107 (SPEDEQKASHQHQEAL) are compositionally biased toward basic and acidic residues. A coiled-coil region spans residues 163–828 (LEQALSAVAT…EVRLRQQEEK (666 aa)). 2 stretches are compositionally biased toward basic and acidic residues: residues 664–684 (QEEM…KMWE) and 692–832 (QEEK…MQEH).

It belongs to the GOLGA6 family.

The protein is Golgin subfamily A member 6-like protein 24 of Homo sapiens (Human).